A 428-amino-acid polypeptide reads, in one-letter code: C4-dicarboxylate transport protein (428 aa).

Helical transmembrane passes span 8–28 (VLYV…HYYP), 44–64 (LIKM…IAGM), 78–98 (LLYF…ATHI), 148–168 (GEIL…AHLG), 184–204 (VLFG…FGAM), 222–242 (LIGT…GAIA), 307–327 (IYMT…LTWM), and 355–375 (AATL…ILGI).

The protein belongs to the dicarboxylate/amino acid:cation symporter (DAACS) (TC 2.A.23) family.

It is found in the cell inner membrane. Its function is as follows. Responsible for the transport of dicarboxylates such as succinate, fumarate, and malate from the periplasm across the membrane. The sequence is that of C4-dicarboxylate transport protein from Burkholderia pseudomallei (strain 1106a).